Reading from the N-terminus, the 94-residue chain is Parvalbumin beta 4 (94 aa).

N-acetylalanine is present on Ala1. EF-hand domains follow at residues 36–63 (FFAIIDQDHSGFIEEEELKLFLQTFSAG) and 67–94 (LSDAETKTFLAAGDVDGDGMIGVDEFAA). 11 residues coordinate Ca(2+): Asp41, Asp43, Ser45, Phe47, Glu49, Glu52, Asp80, Asp82, Asp84, Met86, and Glu91.

The protein belongs to the parvalbumin family.

In muscle, parvalbumin is thought to be involved in relaxation after contraction. It binds two calcium ions. This chain is Parvalbumin beta 4, found in Merluccius bilinearis (Silver hake).